The sequence spans 302 residues: Nucleotide-binding protein Rsph17029_0317 (302 aa).

15–22 (GPSGAGRT) serves as a coordination point for ATP. Residue 62–65 (DVRN) participates in GTP binding.

It belongs to the RapZ-like family.

Functionally, displays ATPase and GTPase activities. The sequence is that of Nucleotide-binding protein Rsph17029_0317 from Cereibacter sphaeroides (strain ATCC 17029 / ATH 2.4.9) (Rhodobacter sphaeroides).